The chain runs to 504 residues: Glutamate--tRNA ligase (504 aa).

The short motif at proline 10–threonine 20 is the 'HIGH' region element. The 'KMSKS' region motif lies at lysine 251–arginine 255. Lysine 254 lines the ATP pocket.

It belongs to the class-I aminoacyl-tRNA synthetase family. Glutamate--tRNA ligase type 1 subfamily. In terms of assembly, monomer.

Its subcellular location is the cytoplasm. The catalysed reaction is tRNA(Glu) + L-glutamate + ATP = L-glutamyl-tRNA(Glu) + AMP + diphosphate. Its function is as follows. Catalyzes the attachment of glutamate to tRNA(Glu) in a two-step reaction: glutamate is first activated by ATP to form Glu-AMP and then transferred to the acceptor end of tRNA(Glu). The chain is Glutamate--tRNA ligase from Cellvibrio japonicus (strain Ueda107) (Pseudomonas fluorescens subsp. cellulosa).